The sequence spans 238 residues: Complement C1q-like protein 4 (238 aa).

Residues 1–15 form the signal peptide; the sequence is MVLLLLVAIPLLVHS. The disordered stretch occupies residues 37–102; that stretch reads SRGQGPDGAP…PGPGPGGAAP (66 aa). The Collagen-like domain maps to 53-96; the sequence is PPGAKGEVGRRGKAGLRGPPGPPGPRGPPGEPGRPGPPGPPGPG. The segment covering 71 to 96 has biased composition (pro residues); that stretch reads PPGPPGPRGPPGEPGRPGPPGPPGPG. Residues 105–238 enclose the C1q domain; it reads GYVPRIAFYA…TFSGFIIYPD (134 aa).

Forms homooligomers, predominantly dimers or trimers. Forms heterooligomers with C1QL1, C1QL2 and C1QL3, when proteins are coexpressed; this interaction does not occur after secretion. Interacts with ADGRB3. Highly expressed in testis and adipose tissue, brown adipose tissue expressing higher levels than subcutaneous and visceral white adipose tissue. In gonadal fat pad, expressed at lower levels in adipocytes than in the stromal vascular fraction (VSP), which contains preadipocytes, fibroblasts, endothelial cells and occasional immune cells. Expression exhibits sexually dimorphism, with higher levels in females than in males.

It is found in the secreted. May regulate the number of excitatory synapses that are formed on hippocampus neurons. Has no effect on inhibitory synapses. May inhibit adipocyte differentiation at an early stage of the process. This chain is Complement C1q-like protein 4 (C1ql4), found in Mus musculus (Mouse).